Here is a 293-residue protein sequence, read N- to C-terminus: Glycine N-methyltransferase (293 aa).

Val2 carries the post-translational modification N-acetylvaline. Positions 4 and 6 each coordinate (6S)-5-methyl-5,6,7,8-tetrahydrofolate. Ser10 carries the post-translational modification Phosphoserine. 4 residues coordinate S-adenosyl-L-methionine: Tyr22, Trp31, Tyr34, and Arg41. The residue at position 34 (Tyr34) is a Phosphotyrosine. Lys46 carries the post-translational modification N6-succinyllysine. S-adenosyl-L-methionine-binding positions include Ala65, 86–88 (DAS), 117–118 (NW), 137–140 (LGNS), and Arg176. N6-succinyllysine is present on residues Lys191, Lys196, and Lys201. (6S)-5-methyl-5,6,7,8-tetrahydrofolate is bound at residue His215. Tyr221 serves as a coordination point for S-adenosyl-L-methionine. Arg240 provides a ligand contact to (6S)-5-methyl-5,6,7,8-tetrahydrofolate.

The protein belongs to the class I-like SAM-binding methyltransferase superfamily. Glycine N-methyltransferase family. As to quaternary structure, homotetramer. In terms of tissue distribution, abundant in liver.

The protein localises to the cytoplasm. The enzyme catalyses glycine + S-adenosyl-L-methionine = sarcosine + S-adenosyl-L-homocysteine + H(+). With respect to regulation, inhibited by 5-methyltetrahydrofolate monoglutamate and by 5-methyltetrahydrofolate pentaglutamate, inhibition is much more effective by the pentaglutamate form than by the monoglutamate form. Two molecules of 5-methyltetrahydrofolate are bound per tetramer. The binding sites are localized between subunits. Inhibitor binding may preclude movements of the polypeptide chain that are necessary for enzyme activity. In terms of biological role, catalyzes the methylation of glycine by using S-adenosylmethionine (AdoMet) to form N-methylglycine (sarcosine) with the concomitant production of S-adenosylhomocysteine (AdoHcy), a reaction regulated by the binding of 5-methyltetrahydrofolate. Possible crucial role in the regulation of tissue concentration of AdoMet and of metabolism of methionine. The sequence is that of Glycine N-methyltransferase (Gnmt) from Rattus norvegicus (Rat).